A 717-amino-acid chain; its full sequence is Asp/Glu-specific dipeptidyl-peptidase (717 aa).

A signal peptide spans 1–21 (MNKRFFPTLLLAFVCSTLAYA). Active-site charge relay system residues include His-85, Asp-226, and Ser-652.

The protein belongs to the peptidase S46 family.

It localises to the secreted. Its subcellular location is the cell surface. Its activity is regulated as follows. Enzyme activity is completely blocked by diisopropyl-fluorophosphates, moderately by phenylmethylsulfonyl fluoride (PMSF) and 4-(2-methyl)benzenesulfonyl fluoride, and slightly by pepstatin in vitro. Functionally, catalyzes the removal of dipeptides from the N-terminus of oligopeptides. Shows a strict specificity for acidic residues (Asp or Glu) in the P1 position, and has a hydrophobic residue preference at the P2 position. Is likely involved in amino acid metabolism and bacterial growth/survival of asaccharolytic P.endodontalis, that utilizes amino acids from extracellular proteinaceous nutrients as energy and carbon sources. The polypeptide is Asp/Glu-specific dipeptidyl-peptidase (dpp11) (Porphyromonas endodontalis (strain ATCC 35406 / DSM 24491 / JCM 8526 / CCUG 16442 / BCRC 14492 / NCTC 13058 / HG 370) (Bacteroides endodontalis)).